The primary structure comprises 342 residues: Nicotinate-nucleotide--dimethylbenzimidazole phosphoribosyltransferase (342 aa).

Glutamate 311 serves as the catalytic Proton acceptor.

The protein belongs to the CobT family.

It catalyses the reaction 5,6-dimethylbenzimidazole + nicotinate beta-D-ribonucleotide = alpha-ribazole 5'-phosphate + nicotinate + H(+). It participates in nucleoside biosynthesis; alpha-ribazole biosynthesis; alpha-ribazole from 5,6-dimethylbenzimidazole: step 1/2. In terms of biological role, catalyzes the synthesis of alpha-ribazole-5'-phosphate from nicotinate mononucleotide (NAMN) and 5,6-dimethylbenzimidazole (DMB). The sequence is that of Nicotinate-nucleotide--dimethylbenzimidazole phosphoribosyltransferase from Shewanella sediminis (strain HAW-EB3).